Reading from the N-terminus, the 536-residue chain is Methyl-accepting chemotaxis aspartate transducer (536 aa).

At methionine 1 to serine 10 the chain is on the cytoplasmic side. The chain crosses the membrane as a helical span at residues leucine 11–valine 31. Topologically, residues alanine 32–serine 188 are periplasmic. Residues arginine 64–arginine 73 are the 3 Arg may form a positively charged pocket, which binds the alpha-carboxyl group of the attractant AA. Residues isoleucine 189–tryptophan 209 traverse the membrane as a helical segment. The Cytoplasmic portion of the chain corresponds to leucine 210 to alanine 536. The region spanning threonine 212–glycine 264 is the HAMP domain. Residues glycine 269–glutamate 498 enclose the Methyl-accepting transducer domain. At glutamine 293 the chain carries Glutamate methyl ester (Gln). Glutamate 300 is subject to Glutamate methyl ester (Glu). Glutamine 307 carries the glutamate methyl ester (Gln) modification. Glutamate methyl ester (Glu) is present on residues glutamate 489 and glutamate 498.

It belongs to the methyl-accepting chemotaxis (MCP) protein family.

The protein resides in the cell inner membrane. In terms of biological role, this protein responds to changes in Asp concentration in the environment, transduces a signal from the outside to the inside of the cell, and facilitates sensory adaptation through various levels of methylation. Chemotactic-signal transducers respond to changes in the concentration of attractants and repellents in the environment, transduce a signal from the outside to the inside of the cell, and facilitate sensory adaptation through the variation of the level of methylation. Attractants increase the level of methylation while repellents decrease the level of methylation, the methyl groups are added by the methyltransferase CheR and removed by the methylesterase CheB. This is Methyl-accepting chemotaxis aspartate transducer (tas) from Klebsiella aerogenes (strain ATCC 13048 / DSM 30053 / CCUG 1429 / JCM 1235 / KCTC 2190 / NBRC 13534 / NCIMB 10102 / NCTC 10006 / CDC 819-56) (Enterobacter aerogenes).